A 206-amino-acid chain; its full sequence is Uridine kinase (206 aa).

11-18 is a binding site for ATP; sequence GGSASGKT.

This sequence belongs to the uridine kinase family.

Its subcellular location is the cytoplasm. The enzyme catalyses uridine + ATP = UMP + ADP + H(+). The catalysed reaction is cytidine + ATP = CMP + ADP + H(+). It functions in the pathway pyrimidine metabolism; CTP biosynthesis via salvage pathway; CTP from cytidine: step 1/3. Its pathway is pyrimidine metabolism; UMP biosynthesis via salvage pathway; UMP from uridine: step 1/1. The protein is Uridine kinase of Lactococcus lactis subsp. lactis (strain IL1403) (Streptococcus lactis).